Here is a 1077-residue protein sequence, read N- to C-terminus: ATP-dependent helicase/deoxyribonuclease subunit B (1077 aa).

This sequence belongs to the helicase family. AddB/RexB type 2 subfamily. Heterodimer of AddA and RexB. Requires Mg(2+) as cofactor.

Functionally, the heterodimer acts as both an ATP-dependent DNA helicase and an ATP-dependent, dual-direction single-stranded exonuclease. Recognizes the chi site generating a DNA molecule suitable for the initiation of homologous recombination. This subunit has 5' -&gt; 3' nuclease activity but not helicase activity. The sequence is that of ATP-dependent helicase/deoxyribonuclease subunit B from Streptococcus agalactiae serotype III (strain NEM316).